The primary structure comprises 272 residues: Pyrroline-5-carboxylate reductase (272 aa).

It belongs to the pyrroline-5-carboxylate reductase family.

The protein resides in the cytoplasm. The enzyme catalyses L-proline + NADP(+) = (S)-1-pyrroline-5-carboxylate + NADPH + 2 H(+). The catalysed reaction is L-proline + NAD(+) = (S)-1-pyrroline-5-carboxylate + NADH + 2 H(+). It participates in amino-acid biosynthesis; L-proline biosynthesis; L-proline from L-glutamate 5-semialdehyde: step 1/1. Its function is as follows. Catalyzes the reduction of 1-pyrroline-5-carboxylate (PCA) to L-proline. The sequence is that of Pyrroline-5-carboxylate reductase from Vibrio alginolyticus.